A 439-amino-acid polypeptide reads, in one-letter code: D-inositol 3-phosphate glycosyltransferase (439 aa).

Residue H21 coordinates 1D-myo-inositol 3-phosphate. Residues 27–28 (QP) and G35 contribute to the UDP-N-acetyl-alpha-D-glucosamine site. Residues 32-37 (DAGGMN), K90, Y123, T147, and R167 contribute to the 1D-myo-inositol 3-phosphate site. 3 residues coordinate UDP-N-acetyl-alpha-D-glucosamine: R241, K246, and Q299. Mg(2+) is bound by residues Y308, R309, and A311. UDP-N-acetyl-alpha-D-glucosamine is bound by residues E321 and E329. Residue T335 participates in Mg(2+) binding.

This sequence belongs to the glycosyltransferase group 1 family. MshA subfamily. As to quaternary structure, homodimer.

It catalyses the reaction 1D-myo-inositol 3-phosphate + UDP-N-acetyl-alpha-D-glucosamine = 1D-myo-inositol 2-acetamido-2-deoxy-alpha-D-glucopyranoside 3-phosphate + UDP + H(+). Its function is as follows. Catalyzes the transfer of a N-acetyl-glucosamine moiety to 1D-myo-inositol 3-phosphate to produce 1D-myo-inositol 2-acetamido-2-deoxy-glucopyranoside 3-phosphate in the mycothiol biosynthesis pathway. This is D-inositol 3-phosphate glycosyltransferase from Mycobacterium sp. (strain KMS).